The chain runs to 55 residues: Large ribosomal subunit protein bL33 (55 aa).

It belongs to the bacterial ribosomal protein bL33 family.

The polypeptide is Large ribosomal subunit protein bL33 (Xanthobacter autotrophicus (strain ATCC BAA-1158 / Py2)).